The following is a 535-amino-acid chain: uncharacterized protein (535 aa).

The next 6 helical transmembrane spans lie at 55–75 (LITI…IPII), 82–102 (FMPV…IMFV), 115–135 (IICF…ILRH), 143–163 (AFVL…LMLF), 201–221 (STIL…TLIM), and 346–366 (VSGP…NVFA).

It is found in the membrane. This is an uncharacterized protein from Schizosaccharomyces pombe (strain 972 / ATCC 24843) (Fission yeast).